Consider the following 309-residue polypeptide: tRNA pseudouridine synthase B (309 aa).

Asp39 (nucleophile) is an active-site residue. The 78-residue stretch at 229–306 (LPRVVVHQES…ERVLTLRKVF (78 aa)) folds into the PUA domain.

Belongs to the pseudouridine synthase TruB family. Type 1 subfamily.

The catalysed reaction is uridine(55) in tRNA = pseudouridine(55) in tRNA. Functionally, responsible for synthesis of pseudouridine from uracil-55 in the psi GC loop of transfer RNAs. The chain is tRNA pseudouridine synthase B from Thermotoga petrophila (strain ATCC BAA-488 / DSM 13995 / JCM 10881 / RKU-1).